A 141-amino-acid chain; its full sequence is Transcriptional regulator MraZ (141 aa).

2 consecutive SpoVT-AbrB domains span residues 5–47 and 76–119; these read TFNL…KPAD and ANLV…DKVQ.

It belongs to the MraZ family. In terms of assembly, forms oligomers.

The protein localises to the cytoplasm. It is found in the nucleoid. The protein is Transcriptional regulator MraZ of Mycoplasma genitalium (strain ATCC 33530 / DSM 19775 / NCTC 10195 / G37) (Mycoplasmoides genitalium).